The primary structure comprises 1839 residues: Adenylate cyclase (1839 aa).

Disordered stretches follow at residues 1-21 (MSSPTDAERVNMRREKHPQIE), 43-87 (ITTH…PRFS), 126-245 (TSLL…PIVS), 272-315 (KNTE…QWTA), 332-388 (KRKA…DSND), and 400-468 (ESSG…SFSK). Over residues 165–211 (SQSNESRGTRSSIFFPSTSNSRRGSATSTMTSGSRSSHPPDTPPITS) the composition is skewed to polar residues. Positions 212 to 221 (QQQEQQYDQQ) are enriched in low complexity. Over residues 222-233 (RQQRPETREQEQ) the composition is skewed to basic and acidic residues. Over residues 332–355 (KRKAKHHHHYHHPQHPRPPHRKHY) the composition is skewed to basic residues. The span at 361-376 (PIEDKAVVEKEQEPPE) shows a compositional bias: basic and acidic residues. Residues 407–428 (SASTQSVSSFSSGATGASGATG) are compositionally biased toward low complexity. The Ras-associating domain maps to 494-574 (RRYAIRIFNI…LNGYLKSDPL (81 aa)). LRR repeat units lie at residues 632–655 (TSDIESLDVSNNANIFLPLDFIES), 659–679 (LSSLRMVNIRASKFPANVTDA), 681–702 (KLVSLDLERNFIKKVPDSIFKL), 704–726 (NLTIVNLQCNNLERLPPGFSKLK), 727–748 (NLQLLDISSNKFVNYPEVINSC), 750–771 (NLLQIDLSYNKIHSLPVSINQL), 773–794 (KLAKMNLFNNRLTSVGDLSQMK), 795–816 (NLRTLNLRCNRVTSIECHAPNL), 817–834 (QNLFLTDNRISTFDDDLT), 835–856 (RLRTLELQQNPITSMVCGGNYM), 858–879 (NMTSLSLNKAKLSSFSAELLSK), 882–903 (RLEKLELNENNLTQLPPEINKL), 905–926 (RLIYLSVARNKLESIPDEISDL), 928–950 (SLKSLDLHSNNLRMLMNNLEDLE), 951–971 (LTSLNVSSNLLTGFHGSPAKF), 982–1004 (SLLFLSVADNNLTDSIWPLVNTF), 1006–1027 (NLKTLNLSYNNFVEISDLKLQN), 1028–1048 (LTELYLSGNNFTSLPGEAVQH), 1051–1073 (SLKVLMLNGNKLLSLPAELSQLS), 1074–1096 (RLSVLDVGSNQLKYNISNYHYDW), 1103–1124 (DLKYLNFSGNKRFEIKSALDPE), and 1135–1160 (LKQLRVLGLMDVTLKTSKVPDESVSI). The PPM-type phosphatase domain occupies 1173-1439 (RYGVADTLGQ…DNITILCVSL (267 aa)). Residues 1483 to 1620 (AIVFTDIKNS…PVVNKAARVS (138 aa)) enclose the Guanylate cyclase domain. Mg(2+)-binding residues include Asp-1488 and Asp-1531.

This sequence belongs to the adenylyl cyclase class-3 family. Mg(2+) serves as cofactor.

The enzyme catalyses ATP = 3',5'-cyclic AMP + diphosphate. Plays essential roles in regulation of cellular metabolism by catalyzing the synthesis of a second messenger, cAMP. The chain is Adenylate cyclase (CYR1) from Lachancea kluyveri (Yeast).